Here is a 368-residue protein sequence, read N- to C-terminus: D-alanine--D-alanine ligase (368 aa).

Residues 151 to 358 (KKLLAAEGLP…YGTLVSTLVD (208 aa)) enclose the ATP-grasp domain. ATP is bound at residue 179–234 (KSRLHLPVFVKPARGGSSIGITRVAEWAALDDAIAHARLHDPKVIVESGIIGREVE). The Mg(2+) site is built by aspartate 313, glutamate 325, and asparagine 327.

This sequence belongs to the D-alanine--D-alanine ligase family. The cofactor is Mg(2+). It depends on Mn(2+) as a cofactor.

It is found in the cytoplasm. The enzyme catalyses 2 D-alanine + ATP = D-alanyl-D-alanine + ADP + phosphate + H(+). The protein operates within cell wall biogenesis; peptidoglycan biosynthesis. In terms of biological role, cell wall formation. This Rhodococcus jostii (strain RHA1) protein is D-alanine--D-alanine ligase.